The primary structure comprises 179 residues: Large ribosomal subunit protein uL5 (179 aa).

Belongs to the universal ribosomal protein uL5 family. In terms of assembly, part of the 50S ribosomal subunit; part of the 5S rRNA/L5/L18/L25 subcomplex. Contacts the 5S rRNA and the P site tRNA. Forms a bridge to the 30S subunit in the 70S ribosome.

In terms of biological role, this is one of the proteins that bind and probably mediate the attachment of the 5S RNA into the large ribosomal subunit, where it forms part of the central protuberance. In the 70S ribosome it contacts protein S13 of the 30S subunit (bridge B1b), connecting the 2 subunits; this bridge is implicated in subunit movement. Contacts the P site tRNA; the 5S rRNA and some of its associated proteins might help stabilize positioning of ribosome-bound tRNAs. This is Large ribosomal subunit protein uL5 from Carboxydothermus hydrogenoformans (strain ATCC BAA-161 / DSM 6008 / Z-2901).